The following is an 89-amino-acid chain: MSLNAETKAKIVADFSRGTNDTGSPEVQVALLTAQINHLQGHFSVHSKDHHGRRGLLRMVSQRRKLLDYLKRKDDARYKDLISKLGLRR.

This sequence belongs to the universal ribosomal protein uS15 family. Part of the 30S ribosomal subunit. Forms a bridge to the 50S subunit in the 70S ribosome, contacting the 23S rRNA.

One of the primary rRNA binding proteins, it binds directly to 16S rRNA where it helps nucleate assembly of the platform of the 30S subunit by binding and bridging several RNA helices of the 16S rRNA. In terms of biological role, forms an intersubunit bridge (bridge B4) with the 23S rRNA of the 50S subunit in the ribosome. This is Small ribosomal subunit protein uS15 from Tolumonas auensis (strain DSM 9187 / NBRC 110442 / TA 4).